The primary structure comprises 802 residues: Osmosensitive cation channel TMEM63C (802 aa).

Residues 1 to 35 lie on the Extracellular side of the membrane; that stretch reads MTASPESMGQKFRNMTANECFQSRSTVLQGQPFGG. A helical membrane pass occupies residues 36-60; the sequence is IPTVLLLNIILWVCVVLVYSFLRKA. Over 61–124 the chain is Cytoplasmic; the sequence is AWDYGRLALL…RDRDLINKCG (64 aa). 2 positions are modified to phosphoserine: S75 and S78. The chain crosses the membrane as a helical span at residues 125-157; it reads EDARIYIMFQYHLIIFVLILCIPSLGIILPVNY. Residues 158 to 180 are Extracellular-facing; it reads IGSALDWSSHFGRTTIVNVSTES. A helical membrane pass occupies residues 181–205; the sequence is QFLWLHSIFAFMYFLTNFAFMGHHC. The Cytoplasmic portion of the chain corresponds to 206–401; sequence LGFVPKKNLH…IIWKHLSIRR (196 aa). Residues 402–431 form a helical membrane-spanning segment; it reads FSWWARFIAINTSLFFLFFFLTTPAIIINT. The Extracellular portion of the chain corresponds to 432-446; that stretch reads IDMYNVTRPIEKLQS. The helical transmembrane segment at 447–476 threads the bilayer; it reads PVVTQFFPSVLLWAFTVIMPLLVYFSAFLE. Topologically, residues 477–480 are cytoplasmic; sequence AHWT. Residues 481–517 form a helical membrane-spanning segment; it reads RSNQNLIIMYKCYIFLVFMVVILPSMGLTSLDVFLRW. The Extracellular portion of the chain corresponds to 518-540; it reads LFDIYYLEHATIRFQCVFLPDNG. The helical transmembrane segment at 541-573 threads the bilayer; the sequence is AFFINYVITSALFGTGMELMRLGSLCTYCTRLF. Residues 574–593 are Cytoplasmic-facing; the sequence is LSRSEPERVHIRKNLAMDFQ. Residues 594-612 traverse the membrane as a helical segment; the sequence is FGREYAWMLNVFSVVMAYS. The Extracellular segment spans residues 613–615; it reads ITC. Residues 616–640 form a helical membrane-spanning segment; sequence PIIVPFGLLYLCMKHITDRYNMYYS. At 641–647 the chain is on the cytoplasmic side; that stretch reads YAPTKLN. The chain crosses the membrane as a helical span at residues 648–676; the sequence is AQIHMAAVYQAIFAPLLGLFWMLFFSILR. At 677-681 the chain is on the extracellular side; the sequence is VGSLH. The helical transmembrane segment at 682 to 702 threads the bilayer; the sequence is SITLFSLSSIIISVIIAFSGV. The Cytoplasmic portion of the chain corresponds to 703–802; sequence FLGKFRIAQQ…EGLELEGQSH (100 aa). The segment at 753–785 is disordered; it reads TPASSPARHTYGTMNSQPEEGEEESGLRGFARE.

It belongs to the CSC1 (TC 1.A.17) family. In terms of assembly, monomer. In terms of tissue distribution, expressed in podocytes of kidney glomeruli.

The protein localises to the endoplasmic reticulum membrane. Its subcellular location is the cell membrane. The catalysed reaction is Ca(2+)(in) = Ca(2+)(out). In terms of biological role, acts as an osmosensitive cation channel preferentially activated upon hypotonic stress. In contrast to TMEM63B, does not show phospholipid scramblase activity. Enriched in mitochondria-ER contact sites where it may regulate the metabolite flux and organelles' morphologies in response to osmotic changes. In particular may regulate mitochondrial motility and function in motor neuron axons. Required for the functional integrity of the kidney glomerular filtration barrier. In Rattus norvegicus (Rat), this protein is Osmosensitive cation channel TMEM63C (Tmem63c).